Here is a 457-residue protein sequence, read N- to C-terminus: MVKVRFAPSPTGYIHIGNIRSALFNWLYAQAHKGEFILRYDDTDVERSKQEYIDAIAVDLEWLGIQPDAIYYQSKRFNRYDEVAEILKQRGLLYPCYETAEELERRRKIQLSRKLPPIYDRAALKLTAEEKKNCESQGRKPHWRFLLPNFENDPLQTKRTEVCWNDAVKGKQTIDLASLSDPVLIREDETYLYTLPSVVDDVDMAITHIIRGDDHITNTGVQIALFKALDAELPVFGHTNLLATVLGKGFSKRNNDLSIRSLREEGFESIAVQCLAVLIGTSQNVHPYPHQAALLEHFNLQDTSKSVAKFDIADLCTLNSHLVHELNYEDVKTRLKNLSIEGEKAEYFWNAIRSNIDKVNEAVLWWKIIHDEQNFDAVAQEDRAFVQQSLNFLPEGVLKDESWQVWTTALKEKTGRKGKSLFMPLRQALTGMDHGPEMGKLLQLLGREKVIERLSRK.

Positions 8–18 (PSPTGYIHIGN) match the 'HIGH' region motif. The short motif at 249 to 253 (GFSKR) is the 'KMSKS' region element. An ATP-binding site is contributed by Lys252.

This sequence belongs to the class-I aminoacyl-tRNA synthetase family. Glutamate--tRNA ligase type 1 subfamily. As to quaternary structure, monomer.

The protein localises to the cytoplasm. It catalyses the reaction tRNA(Glu) + L-glutamate + ATP = L-glutamyl-tRNA(Glu) + AMP + diphosphate. Catalyzes the attachment of glutamate to tRNA(Glu) in a two-step reaction: glutamate is first activated by ATP to form Glu-AMP and then transferred to the acceptor end of tRNA(Glu). The protein is Glutamate--tRNA ligase 2 of Bartonella tribocorum (strain CIP 105476 / IBS 506).